The chain runs to 929 residues: Bifunctional uridylyltransferase/uridylyl-removing enzyme (929 aa).

A uridylyltransferase region spans residues 1 to 379 (MSPSRPAADE…RPAAKRRRVP (379 aa)). Residues 380 to 735 (ESDDFVIDNN…VGFDEARAVT (356 aa)) are uridylyl-removing. In terms of domain architecture, HD spans 495-618 (VDEHLIRCVG…VETVEQMKML (124 aa)). 2 ACT domains span residues 736–818 (ELTI…AVAR) and 849–929 (VIEV…KPAA).

Belongs to the GlnD family. Mg(2+) is required as a cofactor.

It catalyses the reaction [protein-PII]-L-tyrosine + UTP = [protein-PII]-uridylyl-L-tyrosine + diphosphate. The enzyme catalyses [protein-PII]-uridylyl-L-tyrosine + H2O = [protein-PII]-L-tyrosine + UMP + H(+). Uridylyltransferase (UTase) activity is inhibited by glutamine, while glutamine activates uridylyl-removing (UR) activity. Its function is as follows. Modifies, by uridylylation and deuridylylation, the PII regulatory proteins (GlnB and homologs), in response to the nitrogen status of the cell that GlnD senses through the glutamine level. Under low glutamine levels, catalyzes the conversion of the PII proteins and UTP to PII-UMP and PPi, while under higher glutamine levels, GlnD hydrolyzes PII-UMP to PII and UMP (deuridylylation). Thus, controls uridylylation state and activity of the PII proteins, and plays an important role in the regulation of nitrogen fixation and metabolism. This Rhodopseudomonas palustris (strain ATCC BAA-98 / CGA009) protein is Bifunctional uridylyltransferase/uridylyl-removing enzyme.